The following is a 72-amino-acid chain: Omega-conotoxin-like SVIA mutant 1 (72 aa).

An N-terminal signal peptide occupies residues 1–22; that stretch reads MKLTCVVIVAVLLLTACQLITA. A propeptide spanning residues 23–48 is cleaved from the precursor; the sequence is EDSRGAQKHRTLRSTARRSKSELTTR. 3 disulfide bridges follow: Cys-49–Cys-63, Cys-56–Cys-66, and Cys-62–Cys-71. Pro-55 carries the 4-hydroxyproline modification.

Belongs to the conotoxin O1 superfamily. As to expression, expressed by the venom duct.

It is found in the secreted. Its function is as follows. Omega-conotoxins act at presynaptic membranes, they bind and block voltage-gated calcium channels (Cav). The chain is Omega-conotoxin-like SVIA mutant 1 from Conus striatus (Striated cone).